A 348-amino-acid chain; its full sequence is Sulfate/thiosulfate import ATP-binding protein CysA (348 aa).

The ABC transporter domain occupies 3-237 (IRIQELCKQF…PSSPFVYSFV (235 aa)). 35-42 (GPSGSGKT) contacts ATP.

This sequence belongs to the ABC transporter superfamily. Sulfate/tungstate importer (TC 3.A.1.6) family. The complex is composed of two ATP-binding proteins (CysA), two transmembrane proteins (CysT and CysW) and a solute-binding protein (CysP).

The protein localises to the cell inner membrane. The catalysed reaction is sulfate(out) + ATP + H2O = sulfate(in) + ADP + phosphate + H(+). It carries out the reaction thiosulfate(out) + ATP + H2O = thiosulfate(in) + ADP + phosphate + H(+). In terms of biological role, part of the ABC transporter complex CysAWTP involved in sulfate/thiosulfate import. Responsible for energy coupling to the transport system. The polypeptide is Sulfate/thiosulfate import ATP-binding protein CysA (Xylella fastidiosa (strain 9a5c)).